Here is a 540-residue protein sequence, read N- to C-terminus: uncharacterized protein (540 aa).

This is an uncharacterized protein from Escherichia coli (strain K12).